A 362-amino-acid polypeptide reads, in one-letter code: S-adenosylmethionine:tRNA ribosyltransferase-isomerase (362 aa).

This sequence belongs to the QueA family. As to quaternary structure, monomer.

The protein resides in the cytoplasm. The enzyme catalyses 7-aminomethyl-7-carbaguanosine(34) in tRNA + S-adenosyl-L-methionine = epoxyqueuosine(34) in tRNA + adenine + L-methionine + 2 H(+). The protein operates within tRNA modification; tRNA-queuosine biosynthesis. In terms of biological role, transfers and isomerizes the ribose moiety from AdoMet to the 7-aminomethyl group of 7-deazaguanine (preQ1-tRNA) to give epoxyqueuosine (oQ-tRNA). This is S-adenosylmethionine:tRNA ribosyltransferase-isomerase from Deinococcus radiodurans (strain ATCC 13939 / DSM 20539 / JCM 16871 / CCUG 27074 / LMG 4051 / NBRC 15346 / NCIMB 9279 / VKM B-1422 / R1).